The primary structure comprises 463 residues: L-seryl-tRNA(Sec) selenium transferase (463 aa).

Residue K295 is modified to N6-(pyridoxal phosphate)lysine.

Belongs to the SelA family. As to quaternary structure, homodecamer; pentamer of dimers. Binds only one seryl-tRNA(Sec) per dimer. It depends on pyridoxal 5'-phosphate as a cofactor.

Its subcellular location is the cytoplasm. It carries out the reaction L-seryl-tRNA(Sec) + selenophosphate + H(+) = L-selenocysteinyl-tRNA(Sec) + phosphate. It functions in the pathway aminoacyl-tRNA biosynthesis; selenocysteinyl-tRNA(Sec) biosynthesis; selenocysteinyl-tRNA(Sec) from L-seryl-tRNA(Sec) (bacterial route): step 1/1. Its function is as follows. Converts seryl-tRNA(Sec) to selenocysteinyl-tRNA(Sec) required for selenoprotein biosynthesis. The chain is L-seryl-tRNA(Sec) selenium transferase from Escherichia coli (strain SMS-3-5 / SECEC).